The primary structure comprises 278 residues: Membrane protein insertase YidC 2 (278 aa).

The first 18 residues, 1–18 (MHKRLFITLLGFIILLAG), serve as a signal peptide directing secretion. The N-palmitoyl cysteine moiety is linked to residue Cys19. Cys19 carries the S-diacylglycerol cysteine lipid modification. The next 4 membrane-spanning stretches (helical) occupy residues 55–75 (GFAI…FMLI), 132–152 (MLGC…YMSL), 176–196 (LIMT…NSIH), and 224–244 (AAAL…QMHF).

It belongs to the OXA1/ALB3/YidC family. Type 2 subfamily.

The protein localises to the cell membrane. In terms of biological role, required for the insertion and/or proper folding and/or complex formation of integral membrane proteins into the membrane. Involved in integration of membrane proteins that insert both dependently and independently of the Sec translocase complex, as well as at least some lipoproteins. The polypeptide is Membrane protein insertase YidC 2 (Staphylococcus epidermidis (strain ATCC 12228 / FDA PCI 1200)).